The following is a 266-amino-acid chain: Metallo-beta-lactamase VIM-1 (266 aa).

The N-terminal stretch at 1 to 20 (MLKVISSLLVYMTASVMAVA) is a signal peptide. The Zn(2+) site is built by histidine 114, histidine 116, aspartate 118, histidine 179, cysteine 198, and histidine 240.

It belongs to the metallo-beta-lactamase superfamily. Class-B beta-lactamase family. In terms of assembly, monomer. It depends on Zn(2+) as a cofactor.

The protein resides in the periplasm. It carries out the reaction a beta-lactam + H2O = a substituted beta-amino acid. Its activity is regulated as follows. Weakly inhibited by beta-lactamase-blocking agent sulbactam. In terms of biological role, class B beta-lactamase which confers resistance to the beta-lactam antibiotics, including penicillins, cephalosporins and carbapenems. Acts via hydrolysis of the beta-lactam ring. Has penicillin-, cephalosporin- and carbapenem-hydrolyzing activities. The protein is Metallo-beta-lactamase VIM-1 of Pseudomonas aeruginosa (strain ATCC 15692 / DSM 22644 / CIP 104116 / JCM 14847 / LMG 12228 / 1C / PRS 101 / PAO1).